Here is a 277-residue protein sequence, read N- to C-terminus: Cell death abnormality protein 2 (277 aa).

Positions 14–112 (FYFPGMSRED…EASLLSAYKK (99 aa)) constitute an SH2 domain. The region spanning 113-173 (PIIEVVVGTF…PANYVQVQSG (61 aa)) is the SH3 1 domain. Residues 179–217 (RISKGTSQSSIGSSGNGAERFSSTSTSSENAEAHPTLPT) are disordered. The span at 182-206 (KGTSQSSIGSSGNGAERFSSTSTSS) shows a compositional bias: low complexity. In terms of domain architecture, SH3 2 spans 214–275 (TLPTTAKVTF…PFTYIRFNTA (62 aa)).

It belongs to the CRK family. Interacts with ced-5 (via C-terminus which contains a candidate SH3-binding, proline-rich region). Forms a ternary complex with ced-5 and ced-12. Interacts (via SH-2 domain) with src-1 (when activated and phosphorylated at 'Tyr-416').

In terms of biological role, required for cell migration and engulfment of cell corpses but not for programmed cell death/apoptosis. Also has a role in the migration of the 2 gonadal distal tip cells (DTCs). The polypeptide is Cell death abnormality protein 2 (Caenorhabditis briggsae).